The sequence spans 361 residues: Mitogen-activated protein kinase 14A (361 aa).

The Protein kinase domain occupies 25–309; it reads YQNLSPVGSG…AAEALAHPYF (285 aa). ATP is bound by residues 31-39 and Lys-54; that span reads VGSGAYGTV. Catalysis depends on Asp-151, which acts as the Proton acceptor. At Thr-181 the chain carries Phosphothreonine; by MAP2K6. A TXY motif is present at residues 181 to 183; it reads TGY. Tyr-183 bears the Phosphotyrosine; by MAP2K6 mark.

This sequence belongs to the protein kinase superfamily. CMGC Ser/Thr protein kinase family. MAP kinase subfamily. The cofactor is Mg(2+). In terms of processing, dually phosphorylated on Thr-181 and Tyr-183, which activates the enzyme. As to expression, exclusively expressed in the ovary.

The protein resides in the cytoplasm. Its subcellular location is the nucleus. The catalysed reaction is L-seryl-[protein] + ATP = O-phospho-L-seryl-[protein] + ADP + H(+). It catalyses the reaction L-threonyl-[protein] + ATP = O-phospho-L-threonyl-[protein] + ADP + H(+). Activated by threonine and tyrosine phosphorylation by the dual specificity kinase, MKK6. Serine/threonine kinase which acts as an essential component of the MAP kinase signal transduction pathway. Mapk14a is one of the four p38 MAPKs which play an important role in the cascades of cellular responses evoked by extracellular stimuli such as pro-inflammatory cytokines or physical stress leading to direct activation of transcription factors. Accordingly, p38 MAPKs phosphorylate a broad range of proteins and it has been estimated that they may have approximately 200 to 300 substrates each. Some of the targets are downstream kinases which are activated through phosphorylation and further phosphorylate additional targets. The polypeptide is Mitogen-activated protein kinase 14A (mapk14a) (Cyprinus carpio (Common carp)).